The chain runs to 371 residues: Bifunctional enzyme IspD/IspF (371 aa).

A 2-C-methyl-D-erythritol 4-phosphate cytidylyltransferase region spans residues 1 to 210 (MSEMSLIMLA…LDLPTPSFEI (210 aa)). The 2-C-methyl-D-erythritol 2,4-cyclodiphosphate synthase stretch occupies residues 211–371 (FTGNGFDVHE…NLKYFDWTRL (161 aa)). 2 residues coordinate a divalent metal cation: Asp-217 and His-219. 4-CDP-2-C-methyl-D-erythritol 2-phosphate contacts are provided by residues 217–219 (DVH) and 243–244 (HS). His-251 lines the a divalent metal cation pocket. Residues 265-267 (DIG), 270-274 (YPDTD), 309-315 (AQSPKLK), 341-344 (TTTE), Phe-348, and Arg-351 each bind 4-CDP-2-C-methyl-D-erythritol 2-phosphate.

This sequence in the N-terminal section; belongs to the IspD/TarI cytidylyltransferase family. IspD subfamily. The protein in the C-terminal section; belongs to the IspF family. The cofactor is a divalent metal cation.

It carries out the reaction 2-C-methyl-D-erythritol 4-phosphate + CTP + H(+) = 4-CDP-2-C-methyl-D-erythritol + diphosphate. It catalyses the reaction 4-CDP-2-C-methyl-D-erythritol 2-phosphate = 2-C-methyl-D-erythritol 2,4-cyclic diphosphate + CMP. It participates in isoprenoid biosynthesis; isopentenyl diphosphate biosynthesis via DXP pathway; isopentenyl diphosphate from 1-deoxy-D-xylulose 5-phosphate: step 2/6. Its pathway is isoprenoid biosynthesis; isopentenyl diphosphate biosynthesis via DXP pathway; isopentenyl diphosphate from 1-deoxy-D-xylulose 5-phosphate: step 4/6. Its function is as follows. Bifunctional enzyme that catalyzes the formation of 4-diphosphocytidyl-2-C-methyl-D-erythritol from CTP and 2-C-methyl-D-erythritol 4-phosphate (MEP) (IspD), and catalyzes the conversion of 4-diphosphocytidyl-2-C-methyl-D-erythritol 2-phosphate (CDP-ME2P) to 2-C-methyl-D-erythritol 2,4-cyclodiphosphate (ME-CPP) with a corresponding release of cytidine 5-monophosphate (CMP) (IspF). The protein is Bifunctional enzyme IspD/IspF of Campylobacter jejuni subsp. jejuni serotype O:2 (strain ATCC 700819 / NCTC 11168).